A 370-amino-acid polypeptide reads, in one-letter code: Tomoregulin-1 (370 aa).

The signal sequence occupies residues 1-36 (MDGLHPASWMLLLGSLAFWSASSLLLFSLALPGARA). Residues 37–320 (SNQLLSECHN…VPSRQKLTHV (284 aa)) lie on the Extracellular side of the membrane. An N-linked (GlcNAc...) asparagine glycan is attached at asparagine 53. 2 Kazal-like domains span residues 88–135 (ICQF…PCFS) and 179–227 (VCNI…SCIE). Cystine bridges form between cysteine 89-cysteine 119, cysteine 93-cysteine 112, cysteine 101-cysteine 133, cysteine 180-cysteine 211, cysteine 184-cysteine 204, cysteine 193-cysteine 225, cysteine 265-cysteine 278, cysteine 273-cysteine 289, and cysteine 291-cysteine 300. In terms of domain architecture, EGF-like spans 261-301 (NYIPCSENYNGYCVHGKCELSYSSQKASCRCDSGYTGQYCD). The chain crosses the membrane as a helical span at residues 321–341 (LIAAIIGAVQIAIIVAIVMCI). Over 342–370 (TRKCPKNNRGRRQKQNLGHFSSDTSSRMV) the chain is Cytoplasmic. The interval 349 to 370 (NRGRRQKQNLGHFSSDTSSRMV) is disordered. Positions 356 to 370 (QNLGHFSSDTSSRMV) are enriched in polar residues.

It belongs to the tomoregulin family. In terms of assembly, interacts with cripto. In terms of tissue distribution, expressed at highest levels in brain, and at lower levels in neuroendocrine tissues. Present in neurons from the diencephalon (at protein level).

The protein localises to the cell membrane. Functionally, inhibits nodal/nr-1 and bmp signaling during neural patterning through interaction with cripto. The sequence is that of Tomoregulin-1 (tmeff1) from Xenopus laevis (African clawed frog).